The following is a 353-amino-acid chain: Melanin-concentrating hormone receptor 1 (353 aa).

Residues 1–29 (MDLEASLLPTGPNASNTSDGPDNLTSAGS) form a disordered region. At 1-44 (MDLEASLLPTGPNASNTSDGPDNLTSAGSPPRTGSISYINIIMP) the chain is on the extracellular side. Positions 12-29 (PNASNTSDGPDNLTSAGS) are enriched in polar residues. N-linked (GlcNAc...) asparagine glycans are attached at residues asparagine 13, asparagine 16, and asparagine 23. The helical transmembrane segment at 45-67 (SVFGTICLLGIIGNSTVIFAVVK) threads the bilayer. At 68 to 79 (KSKLHWCNNVPD) the chain is on the cytoplasmic side. The chain crosses the membrane as a helical span at residues 80–102 (IFIINLSVVDLLFLLGMPFMIHQ). Over 103–116 (LMGNGVWHFGETMC) the chain is Extracellular. An intrachain disulfide couples cysteine 116 to cysteine 194. A helical transmembrane segment spans residues 117-139 (TLITAMDANSQFTSTYILTAMAI). The Cytoplasmic segment spans residues 140–158 (DRYLATVHPISSTKFRKPS). Residues 159-181 (VATLVICLLWALSFISITPVWLY) form a helical membrane-spanning segment. The Extracellular portion of the chain corresponds to 182 to 209 (ARLIPFPGGAVGCGIRLPNPDTDLYWFT). A helical transmembrane segment spans residues 210–232 (LYQFFLAFALPFVVITAAYVRIL). Over 233-252 (QRMTSSVAPASQRSIRLRTK) the chain is Cytoplasmic. The helical transmembrane segment at 253–275 (RVTRTAIAICLVFFVCWAPYYVL) threads the bilayer. Residues 276-289 (QLTQLSISRPTLTF) are Extracellular-facing. Residues 290–312 (VYLYNAAISLGYANSCLNPFVYI) form a helical membrane-spanning segment. Over 313–353 (VLCETFRKRLVLSVKPAAQGQLRAVSNAQTADEERTESKGT) the chain is Cytoplasmic.

Belongs to the G-protein coupled receptor 1 family. As to quaternary structure, interacts with NCDN. In terms of tissue distribution, highest level in brain, particularly in the frontal cortex and hypothalamus, lower levels in the liver and heart.

The protein localises to the cell membrane. Its function is as follows. Receptor for melanin-concentrating hormone, coupled to both G proteins that inhibit adenylyl cyclase and G proteins that activate phosphoinositide hydrolysis. The sequence is that of Melanin-concentrating hormone receptor 1 from Homo sapiens (Human).